Reading from the N-terminus, the 218-residue chain is Recombination protein RecR (218 aa).

The C4-type zinc-finger motif lies at 56–71 (CRICCNISRDEVCRIC). One can recognise a Toprim domain in the interval 79 to 195 (GLICVVEEPK…VVSRLASGMP (117 aa)).

Belongs to the RecR family.

Its function is as follows. May play a role in DNA repair. It seems to be involved in an RecBC-independent recombinational process of DNA repair. It may act with RecF and RecO. This chain is Recombination protein RecR, found in Corynebacterium efficiens (strain DSM 44549 / YS-314 / AJ 12310 / JCM 11189 / NBRC 100395).